A 220-amino-acid polypeptide reads, in one-letter code: Cytidylate kinase (220 aa).

9–17 (GPAASGKST) is a binding site for ATP.

It belongs to the cytidylate kinase family. Type 1 subfamily.

The protein resides in the cytoplasm. It carries out the reaction CMP + ATP = CDP + ADP. It catalyses the reaction dCMP + ATP = dCDP + ADP. This chain is Cytidylate kinase, found in Thermotoga sp. (strain RQ2).